Reading from the N-terminus, the 157-residue chain is Phosphopantetheine adenylyltransferase (157 aa).

Serine 9 is a substrate binding site. Residues 9–10 and histidine 17 each bind ATP; that span reads SF. Substrate-binding residues include lysine 41, leucine 73, and lysine 87. ATP-binding positions include 88–90, glutamate 98, and 123–129; these read GLR and YSFLSSS.

Belongs to the bacterial CoaD family. As to quaternary structure, homohexamer. Mg(2+) serves as cofactor.

Its subcellular location is the cytoplasm. The enzyme catalyses (R)-4'-phosphopantetheine + ATP + H(+) = 3'-dephospho-CoA + diphosphate. It participates in cofactor biosynthesis; coenzyme A biosynthesis; CoA from (R)-pantothenate: step 4/5. Functionally, reversibly transfers an adenylyl group from ATP to 4'-phosphopantetheine, yielding dephospho-CoA (dPCoA) and pyrophosphate. This is Phosphopantetheine adenylyltransferase from Alkaliphilus oremlandii (strain OhILAs) (Clostridium oremlandii (strain OhILAs)).